Here is a 146-residue protein sequence, read N- to C-terminus: Hemoglobin subunit beta (146 aa).

At Val1 the chain carries N-acetylvaline. The Globin domain occupies 2-146; the sequence is HLTDAEKAAI…VASALAHKYH (145 aa). His63 contacts heme b. At Lys82 the chain carries N6-acetyllysine. Residue His92 coordinates heme b. S-nitrosocysteine is present on Cys93. The residue at position 144 (Lys144) is an N6-acetyllysine.

Belongs to the globin family. As to quaternary structure, heterotetramer of two alpha chains and two beta chains. Red blood cells.

Its function is as follows. Involved in oxygen transport from the lung to the various peripheral tissues. This is Hemoglobin subunit beta (HBB) from Microtus xanthognathus (Yellow-cheeked vole).